Consider the following 831-residue polypeptide: MPSQSRSRDRYGRDSDRDRSRVQPRRRYHVSEDDDDDDDFDDNPRDRRYRRDGYRRAPVDSRAYDSHDDYEVVDVEEEPRRYRSDTERRRERARASPGTSPRKRERTRDSGGGHRRRRTEESDGSQAPQAHRDRRSRTRRDRGLDDEDLEDAARRLRRRERERERERRAETSKHKSTDSSNSSAGLLNANALAKLRAQHEELDRQEQRRAEKEAKAERKRRRKRPAVEGQMRTLDPFPDEVPRGQSKGRIVSGAYLEEGRAPDMEVRLRGGGRGPPRERRWEKDSDGSAPLTPFWKRKKWWWIGAIVLVIVVIIIVVAVVVSNNKKSDSDSDSDSNSGSSDSWGGDKSSLNGLDHDSIPKSAQGTVLDPWTWYETTDFNVTYTDETVGGLSVMGLNSTWDDSVAPNENVPPLNKPFPYGSQPIRGVNIGGLLSLEPFITPSLFEGYSSDVVDEYTLTTKLGDNAARKLEEHYATFITEQDFADMAEAGIDHVRIPFSYWAVNPREDEPYVAKISWRYLLRVIEYCRKYGLRVNLDPHGMPGSQNGMNHSGRQGSIRWLNGDDGDTYAQRSLEFHEKISKFFAQDRYKNIITIYGLINEPYMLSLDVEKVLNWTVTAAELVQKNGITAKIAFHDGFLNLSKWKTMLKNGPSNLLLDTHQYTIYNVAQIVLNHTAKVNFVCNDWVGMIGEINSTSEGWGPTICGEFTQADTDCAKNLNNVGRGTRWEGTYSEGDSTMYCPTAEQRTCSCTEANADPSEYSDDYKLFLKTYAEAQMYAFEQAQGWFYWTWHTESAPQWSYKTGWKNGFMPAKAYNPDYKCGDDIPSFGNLPEYY.

Residues 1-21 (MPSQSRSRDRYGRDSDRDRSR) show a composition bias toward basic and acidic residues. Disordered stretches follow at residues 1–246 (MPSQ…RGQS) and 261–288 (APDM…SDGS). Over 1-300 (MPSQSRSRDR…LTPFWKRKKW (300 aa)) the chain is Cytoplasmic. The segment covering 32–41 (EDDDDDDDFD) has biased composition (acidic residues). Basic and acidic residues-rich tracts occupy residues 42–70 (DNPR…HDDY), 78–94 (EPRR…ERAR), and 151–177 (DAAR…HKST). Residues 178–195 (DSSNSSAGLLNANALAKL) show a composition bias toward low complexity. 2 stretches are compositionally biased toward basic and acidic residues: residues 197 to 216 (AQHE…EAKA) and 275 to 286 (PPRERRWEKDSD). The chain crosses the membrane as a helical; Signal-anchor for type II membrane protein span at residues 301 to 321 (WWIGAIVLVIVVIIIVVAVVV). Over 322–831 (SNNKKSDSDS…PSFGNLPEYY (510 aa)) the chain is Extracellular. Residues 325-360 (KKSDSDSDSDSNSGSSDSWGGDKSSLNGLDHDSIPK) form a disordered region. Positions 334–350 (DSNSGSSDSWGGDKSSL) are enriched in low complexity. 3 N-linked (GlcNAc...) asparagine glycosylation sites follow: Asn-379, Asn-396, and Asn-547. Glu-598 acts as the Proton donor in catalysis. N-linked (GlcNAc...) asparagine glycosylation is found at Asn-611, Asn-637, Asn-670, and Asn-690. Glu-703 serves as the catalytic Nucleophile.

This sequence belongs to the glycosyl hydrolase 5 (cellulase A) family.

The protein localises to the cell membrane. The catalysed reaction is Successive hydrolysis of beta-D-glucose units from the non-reducing ends of (1-&gt;3)-beta-D-glucans, releasing alpha-glucose.. In terms of biological role, glucosidase involved in the degradation of cellulosic biomass. Active on lichenan. This is Glucan 1,3-beta-glucosidase D (exgD) from Emericella nidulans (strain FGSC A4 / ATCC 38163 / CBS 112.46 / NRRL 194 / M139) (Aspergillus nidulans).